The following is a 143-amino-acid chain: Putative cytokinin riboside 5'-monophosphate phosphoribohydrolase LOG9 (143 aa).

Substrate is bound by residues 23–24 (RK), 41–47 (RYETMEE), and threonine 53.

Belongs to the LOG family.

The catalysed reaction is N(6)-(dimethylallyl)adenosine 5'-phosphate + H2O = N(6)-dimethylallyladenine + D-ribose 5-phosphate. It catalyses the reaction 9-ribosyl-trans-zeatin 5'-phosphate + H2O = trans-zeatin + D-ribose 5-phosphate. Its function is as follows. Cytokinin-activating enzyme working in the direct activation pathway. Phosphoribohydrolase that converts inactive cytokinin nucleotides to the biologically active free-base forms. In Arabidopsis thaliana (Mouse-ear cress), this protein is Putative cytokinin riboside 5'-monophosphate phosphoribohydrolase LOG9 (LOG9).